Consider the following 644-residue polypeptide: 1-deoxy-D-xylulose-5-phosphate synthase (644 aa).

Residues His78 and 120 to 122 (GHA) contribute to the thiamine diphosphate site. Residue Asp149 coordinates Mg(2+). Thiamine diphosphate-binding positions include 150-151 (AA), Asn178, and Glu373. Residue Asn178 coordinates Mg(2+).

It belongs to the transketolase family. DXPS subfamily. In terms of assembly, homodimer. Requires Mg(2+) as cofactor. Thiamine diphosphate serves as cofactor.

The enzyme catalyses D-glyceraldehyde 3-phosphate + pyruvate + H(+) = 1-deoxy-D-xylulose 5-phosphate + CO2. It participates in metabolic intermediate biosynthesis; 1-deoxy-D-xylulose 5-phosphate biosynthesis; 1-deoxy-D-xylulose 5-phosphate from D-glyceraldehyde 3-phosphate and pyruvate: step 1/1. Functionally, catalyzes the acyloin condensation reaction between C atoms 2 and 3 of pyruvate and glyceraldehyde 3-phosphate to yield 1-deoxy-D-xylulose-5-phosphate (DXP). The polypeptide is 1-deoxy-D-xylulose-5-phosphate synthase (Chlamydia caviae (strain ATCC VR-813 / DSM 19441 / 03DC25 / GPIC) (Chlamydophila caviae)).